Here is a 369-residue protein sequence, read N- to C-terminus: NAD(P)H-quinone oxidoreductase subunit 1, chloroplastic (369 aa).

Transmembrane regions (helical) follow at residues 29–49, 97–117, 129–149, 167–187, 205–225, 255–275, 305–325, and 348–368; these read IWIIVSILTTIVGVTLGVLVI, IWLFNVGPAIVVIPVFLSYLV, LGIGVFFWIAVSSIAPLGLLM, AAQSISYEIPLALCVLSISLL, LLGWNLWRQPIGFLIFFISSL, FGLFYVGSYLNLLVSSLFVTV, IINAIIGIIITLTKAYLFLFV, and FLLPVALGNLLLTASFQILLL.

Belongs to the complex I subunit 1 family. In terms of assembly, NDH is composed of at least 16 different subunits, 5 of which are encoded in the nucleus.

The protein localises to the plastid. It localises to the chloroplast thylakoid membrane. The catalysed reaction is a plastoquinone + NADH + (n+1) H(+)(in) = a plastoquinol + NAD(+) + n H(+)(out). It carries out the reaction a plastoquinone + NADPH + (n+1) H(+)(in) = a plastoquinol + NADP(+) + n H(+)(out). In terms of biological role, NDH shuttles electrons from NAD(P)H:plastoquinone, via FMN and iron-sulfur (Fe-S) centers, to quinones in the photosynthetic chain and possibly in a chloroplast respiratory chain. The immediate electron acceptor for the enzyme in this species is believed to be plastoquinone. Couples the redox reaction to proton translocation, and thus conserves the redox energy in a proton gradient. The sequence is that of NAD(P)H-quinone oxidoreductase subunit 1, chloroplastic from Angiopteris evecta (Mule's foot fern).